A 439-amino-acid polypeptide reads, in one-letter code: Probable RNA-binding protein 23 (439 aa).

The disordered stretch occupies residues 13-159 (MLEAPYKKEE…PVREPVDNLS (147 aa)). The segment covering 17–34 (PYKKEEDEQQRKEVKKDY) has biased composition (basic and acidic residues). Residues 36 to 57 (SNTTSSTSNSGNETSGSSTIGE) show a composition bias toward low complexity. Over residues 60–90 (KKKRSRSHNKSRDRKRSRSRDRDRYRRRNSR) the composition is skewed to basic residues. The span at 103–125 (RSWDRRHGSESRSRDHRREDRVH) shows a compositional bias: basic and acidic residues. Phosphoserine occurs at positions 128 and 149. Basic and acidic residues predominate over residues 144-159 (HFREKSPVREPVDNLS). 2 RRM domains span residues 166 to 243 (RTVF…ASQA) and 263 to 341 (MRLY…HVTE).

Belongs to the splicing factor SR family. Post-translationally, aryl sulfonamide anticancer drugs, such as indisulam (E7070) or E7820, promote ubiquitination and subsequent degradation by the DCX(DCAF15) complex. Aryl sulfonamide anticancer drugs change the substrate specificity of DCAF15 by acting as a molecular glue that promotes binding between DCAF15 and weak affinity interactor RBM23. Highly expressed in placenta, liver, skeletal muscle, heart and kidney. Expressed at lower levels in the colon, thymus, spleen, small intestine and lung.

It localises to the nucleus. Functionally, RNA-binding protein that acts both as a transcription coactivator and pre-mRNA splicing factor. Regulates steroid hormone receptor-mediated transcription, independently of the pre-mRNA splicing factor activity. In Homo sapiens (Human), this protein is Probable RNA-binding protein 23.